The primary structure comprises 187 residues: Cytochrome b-245 chaperone 1 (187 aa).

The chain crosses the membrane as a helical span at residues Gly-20–Gly-42. Ser-168 bears the Phosphoserine mark.

Belongs to the CYBC1 family. In terms of assembly, interacts with CYBB; CYBC1 may act as a chaperone stabilizing Cytochrome b-245 heterodimer.

Its subcellular location is the endoplasmic reticulum membrane. Functions as a chaperone necessary for a stable expression of the CYBA and CYBB subunits of the cytochrome b-245 heterodimer. Controls the phagocyte respiratory burst and is essential for innate immunity. This Bos taurus (Bovine) protein is Cytochrome b-245 chaperone 1.